Consider the following 73-residue polypeptide: Large ribosomal subunit protein bL28 (73 aa).

It belongs to the bacterial ribosomal protein bL28 family.

In Buchnera aphidicola subsp. Cinara cedri (strain Cc), this protein is Large ribosomal subunit protein bL28.